The sequence spans 1435 residues: RNA-directed RNA polymerase VP1 (1435 aa).

Residues 604–880 (VLHNVLRPAY…KGVLGAPELF (277 aa)) enclose the RdRp catalytic domain.

The protein belongs to the reoviridae RNA-directed RNA polymerase family. As to quaternary structure, interacts with VP4.

The enzyme catalyses RNA(n) + a ribonucleoside 5'-triphosphate = RNA(n+1) + diphosphate. RNA-directed RNA polymerase involved in transcription and genome replication. Following infection, catalyzes the synthesis of fully conservative plus strands. After core assembly, which consists in recruitment of one capped plus-strand for each genomic segments and polymerase complexes, the polymerase switches mode and catalyzes the synthesis of complementary minus-strands. This is RNA-directed RNA polymerase VP1 from Callospermophilus lateralis (Golden-mantled ground squirrel).